The chain runs to 483 residues: Glycogen synthase (483 aa).

Lysine 15 serves as a coordination point for ADP-alpha-D-glucose.

Belongs to the glycosyltransferase 1 family. Bacterial/plant glycogen synthase subfamily.

The enzyme catalyses [(1-&gt;4)-alpha-D-glucosyl](n) + ADP-alpha-D-glucose = [(1-&gt;4)-alpha-D-glucosyl](n+1) + ADP + H(+). It functions in the pathway glycan biosynthesis; glycogen biosynthesis. In terms of biological role, synthesizes alpha-1,4-glucan chains using ADP-glucose. This chain is Glycogen synthase, found in Alkalilimnicola ehrlichii (strain ATCC BAA-1101 / DSM 17681 / MLHE-1).